The following is a 184-amino-acid chain: MYHHSPFYPHHLQTGEQDLDMERENDMDQNSKNSTQKPVKREKRRYRCRKRSPATIERAKTVRRDKANARERRRMNSLNDALEHLRGILPALPDEPKMTKIETLRKAQEYIASLSFQLSGGSPDSSQCCETGSCGLCSASQSLQSTPFQSPCFPQPLQYPSSYSNPPSQMYYHHHHQSPSFPHH.

The segment at 1–55 (MYHHSPFYPHHLQTGEQDLDMERENDMDQNSKNSTQKPVKREKRRYRCRKRSPAT) is disordered. Positions 28-37 (DQNSKNSTQK) are enriched in polar residues. A compositionally biased stretch (basic residues) spans 38–52 (PVKREKRRYRCRKRS). Residues 62–75 (VRRDKANARERRRM) form a basic motif region. The bHLH domain occupies 62–114 (VRRDKANARERRRMNSLNDALEHLRGILPALPDEPKMTKIETLRKAQEYIASL). The tract at residues 76–114 (NSLNDALEHLRGILPALPDEPKMTKIETLRKAQEYIASL) is helix-loop-helix motif. The interval 164–184 (SNPPSQMYYHHHHQSPSFPHH) is disordered. Positions 172–184 (YHHHHQSPSFPHH) are enriched in basic residues.

As to quaternary structure, interacts with hlh-2; the interaction is direct.

It is found in the nucleus. Functionally, acts as a transcriptional regulator. Regulates expression of various genes, including homeobox protein unc-42 and helix-loop-helix protein hlh-34. Required for embryonic viability, neuromuscular development, organization of the nerve ring and neuronal cell body location. Regulates AIY neuron axon morphology and cell fate. Plays a role in cell autonomously establishing a neuronal left-right asymmetry. Involved in regulating glial specification. This chain is Helix-loop-helix protein ngn-1, found in Caenorhabditis elegans.